Here is a 424-residue protein sequence, read N- to C-terminus: UDP-N-acetylglucosamine 1-carboxyvinyltransferase (424 aa).

22 to 23 (KN) contributes to the phosphoenolpyruvate binding site. R93 contributes to the UDP-N-acetyl-alpha-D-glucosamine binding site. Residue C117 is the Proton donor of the active site. At C117 the chain carries 2-(S-cysteinyl)pyruvic acid O-phosphothioketal. Residues 122-126 (RPVDL), 162-165 (KVSV), D307, and I329 contribute to the UDP-N-acetyl-alpha-D-glucosamine site.

The protein belongs to the EPSP synthase family. MurA subfamily.

The protein resides in the cytoplasm. It catalyses the reaction phosphoenolpyruvate + UDP-N-acetyl-alpha-D-glucosamine = UDP-N-acetyl-3-O-(1-carboxyvinyl)-alpha-D-glucosamine + phosphate. It functions in the pathway cell wall biogenesis; peptidoglycan biosynthesis. Its function is as follows. Cell wall formation. Adds enolpyruvyl to UDP-N-acetylglucosamine. The sequence is that of UDP-N-acetylglucosamine 1-carboxyvinyltransferase from Haemophilus influenzae (strain 86-028NP).